The following is a 94-amino-acid chain: Large ribosomal subunit protein uL22 (94 aa).

The protein belongs to the universal ribosomal protein uL22 family. Part of the 50S ribosomal subunit.

Functionally, this protein binds specifically to 23S rRNA; its binding is stimulated by other ribosomal proteins, e.g. L4, L17, and L20. It is important during the early stages of 50S assembly. It makes multiple contacts with different domains of the 23S rRNA in the assembled 50S subunit and ribosome. Its function is as follows. The globular domain of the protein is located near the polypeptide exit tunnel on the outside of the subunit, while an extended beta-hairpin is found that lines the wall of the exit tunnel in the center of the 70S ribosome. The chain is Large ribosomal subunit protein uL22 (rplV) from Tomato big bud phytoplasma.